The chain runs to 413 residues: ATP-dependent RNA helicase RhlB (413 aa).

The Q motif signature appears at 9-37 (QRFADLPLHPQILAALNDQNFEYCTPIQA). In terms of domain architecture, Helicase ATP-binding spans 40–217 (LPLTLQGKDV…FEDMNDPEYI (178 aa)). 53–60 (AQTGTGKT) serves as a coordination point for ATP. The short motif at 163–166 (DEAD) is the DEAD box element. The 148-residue stretch at 241–388 (KMALLMTLLE…VSQYDPDSLI (148 aa)) folds into the Helicase C-terminal domain.

It belongs to the DEAD box helicase family. RhlB subfamily. In terms of assembly, component of the RNA degradosome, which is a multiprotein complex involved in RNA processing and mRNA degradation.

The protein localises to the cytoplasm. The enzyme catalyses ATP + H2O = ADP + phosphate + H(+). In terms of biological role, DEAD-box RNA helicase involved in RNA degradation. Has RNA-dependent ATPase activity and unwinds double-stranded RNA. The chain is ATP-dependent RNA helicase RhlB from Actinobacillus succinogenes (strain ATCC 55618 / DSM 22257 / CCUG 43843 / 130Z).